The following is a 244-amino-acid chain: ATP-dependent Clp protease ATP-binding subunit CLPT4, chloroplastic (244 aa).

A chloroplast-targeting transit peptide spans 1-64 (MQALQASRLT…WRSSGRVITR (64 aa)). A compositionally biased stretch (low complexity) spans 30–48 (SRPISSGVSSSQELSSRSS). 2 disordered regions span residues 30–55 (SRPI…TKSW) and 220–244 (GRRY…VSFL).

Belongs to the ClpA/ClpB family.

It is found in the plastid. It localises to the chloroplast. In terms of biological role, accessory protein regulating the assembly of the plastid Clp protease system. The polypeptide is ATP-dependent Clp protease ATP-binding subunit CLPT4, chloroplastic (Chlamydomonas reinhardtii (Chlamydomonas smithii)).